Consider the following 451-residue polypeptide: NADH-quinone oxidoreductase subunit H (451 aa).

Transmembrane regions (helical) follow at residues 30 to 50, 98 to 118, 138 to 158, 176 to 196, 213 to 233, 262 to 282, 302 to 322, 336 to 356, and 368 to 388; these read LIIVKTLGVFAFLVLATLFMI, AVFILAPVISATPAFLAFAVI, LPVAVLFVLAMSSLGVYGIVL, AAQVVSYEIAMGLSFVGVFLY, WGILWAGVSFAVYAIAMVGET, LFYLAEYINMVTVSALMTTLF, WWPVLWFLIKLGIVLFVFIWL, QFGWKVLIPVNLTWILVEAAI, and VIPFAIFLALVAVGTYVADLV.

It belongs to the complex I subunit 1 family. As to quaternary structure, NDH-1 is composed of 14 different subunits. Subunits NuoA, H, J, K, L, M, N constitute the membrane sector of the complex.

Its subcellular location is the cell membrane. It catalyses the reaction a quinone + NADH + 5 H(+)(in) = a quinol + NAD(+) + 4 H(+)(out). In terms of biological role, NDH-1 shuttles electrons from NADH, via FMN and iron-sulfur (Fe-S) centers, to quinones in the respiratory chain. The immediate electron acceptor for the enzyme in this species is believed to be ubiquinone. Couples the redox reaction to proton translocation (for every two electrons transferred, four hydrogen ions are translocated across the cytoplasmic membrane), and thus conserves the redox energy in a proton gradient. This subunit may bind ubiquinone. The protein is NADH-quinone oxidoreductase subunit H of Acidothermus cellulolyticus (strain ATCC 43068 / DSM 8971 / 11B).